Here is a 279-residue protein sequence, read N- to C-terminus: Pleckstrin homology domain-containing family F member 1 (279 aa).

One can recognise a PH domain in the interval 35–131; it reads VLLGEGVLTK…WISHIEECVR (97 aa). The FYVE-type zinc finger occupies 152-212; that stretch reads DKATDICMRC…VCSLCYRELA (61 aa). Zn(2+) contacts are provided by C158, C161, C175, C178, C183, C186, C204, and C207. Residues 220–263 are disordered; it reads AREGIGGSPPQLSHLGGTVCGASSGDDDDSDEDREGNGDGDWPT. Residues 244 to 253 show a composition bias toward acidic residues; sequence GDDDDSDEDR.

In terms of tissue distribution, widely expressed.

It localises to the nucleus. It is found in the cytoplasm. Its subcellular location is the perinuclear region. The protein resides in the lysosome. In terms of biological role, may induce apoptosis through the lysosomal-mitochondrial pathway. Translocates to the lysosome initiating the permeabilization of lysosomal membrane (LMP) and resulting in the release of CTSD and CTSL to the cytoplasm. Triggers the caspase-independent apoptosis by altering mitochondrial membrane permeabilization (MMP) resulting in the release of PDCD8. The polypeptide is Pleckstrin homology domain-containing family F member 1 (Plekhf1) (Mus musculus (Mouse)).